Reading from the N-terminus, the 350-residue chain is Dihydroorotate dehydrogenase (quinone) (350 aa).

Residues 67 to 71 (AGFDK) and glycine 91 each bind FMN. Lysine 71 lines the substrate pocket. Residue 116–120 (NRMGL) participates in substrate binding. 2 residues coordinate FMN: asparagine 144 and asparagine 177. Asparagine 177 contributes to the substrate binding site. The Nucleophile role is filled by cysteine 180. A substrate-binding site is contributed by asparagine 182. FMN-binding residues include lysine 213 and threonine 241. Substrate is bound at residue 242–243 (NT). The tract at residues 245–265 (TERPASLRSPNAVETGGLSGK) is disordered. FMN-binding positions include glycine 264, glycine 291, and 312-313 (YT).

The protein belongs to the dihydroorotate dehydrogenase family. Type 2 subfamily. In terms of assembly, monomer. It depends on FMN as a cofactor.

It localises to the cell membrane. It catalyses the reaction (S)-dihydroorotate + a quinone = orotate + a quinol. The protein operates within pyrimidine metabolism; UMP biosynthesis via de novo pathway; orotate from (S)-dihydroorotate (quinone route): step 1/1. Its function is as follows. Catalyzes the conversion of dihydroorotate to orotate with quinone as electron acceptor. The sequence is that of Dihydroorotate dehydrogenase (quinone) (pyrD) from Haloarcula marismortui (strain ATCC 43049 / DSM 3752 / JCM 8966 / VKM B-1809) (Halobacterium marismortui).